Here is a 466-residue protein sequence, read N- to C-terminus: Asparagine--tRNA ligase (466 aa).

This sequence belongs to the class-II aminoacyl-tRNA synthetase family. Homodimer.

The protein localises to the cytoplasm. It catalyses the reaction tRNA(Asn) + L-asparagine + ATP = L-asparaginyl-tRNA(Asn) + AMP + diphosphate + H(+). The protein is Asparagine--tRNA ligase of Shewanella baltica (strain OS185).